Consider the following 112-residue polypeptide: Putative pterin-4-alpha-carbinolamine dehydratase (112 aa).

It belongs to the pterin-4-alpha-carbinolamine dehydratase family.

It catalyses the reaction (4aS,6R)-4a-hydroxy-L-erythro-5,6,7,8-tetrahydrobiopterin = (6R)-L-erythro-6,7-dihydrobiopterin + H2O. This chain is Putative pterin-4-alpha-carbinolamine dehydratase, found in Shewanella sp. (strain ANA-3).